The following is a 562-amino-acid chain: Bacillolysin (562 aa).

The N-terminal stretch at Met-1–Ala-24 is a signal peptide. Residues His-25–Pro-245 constitute a propeptide, activation peptide. Positions 303, 305, and 384 each coordinate Ca(2+). His-388 is a Zn(2+) binding site. Residue Glu-389 is part of the active site. His-392 and Glu-412 together coordinate Zn(2+). The Ca(2+) site is built by Glu-423, Asn-429, Asp-431, Glu-433, Glu-436, Tyr-439, Thr-440, and Asp-446. The active-site Proton donor is the His-477.

The protein belongs to the peptidase M4 family. Requires Ca(2+) as cofactor. Zn(2+) is required as a cofactor.

The protein localises to the secreted. It catalyses the reaction Similar, but not identical, to that of thermolysin.. In terms of biological role, extracellular zinc metalloprotease. This chain is Bacillolysin (nprM), found in Priestia megaterium (strain DSM 319 / IMG 1521) (Bacillus megaterium).